A 174-amino-acid chain; its full sequence is Thiol-disulfide oxidoreductase ResA (174 aa).

Residues Thr11–Phe30 traverse the membrane as a helical; Signal-anchor for type II membrane protein segment. Residues Val36–Pro174 enclose the Thioredoxin domain. A disulfide bridge links Cys74 with Cys77.

It belongs to the thioredoxin family. ResA subfamily.

The protein resides in the cell membrane. It participates in protein modification; cytochrome c assembly. In terms of biological role, thiol-disulfide oxidoreductase which is required in disulfide reduction during c-type cytochrome synthesis. May accept reducing equivalents from CcdA, leading to breakage of disulfide bonds in apocytochrome c; following this reduction heme can be covalently attached. This chain is Thiol-disulfide oxidoreductase ResA, found in Geobacillus thermodenitrificans (strain NG80-2).